A 59-amino-acid chain; its full sequence is Potassium channel toxin alpha-KTx 4.1 (59 aa).

Positions 1 to 22 are cleaved as a signal peptide; it reads MKAFYGILIIFILISMIDLSKQ. 3 disulfides stabilise this stretch: C29–C50, C35–C55, and C39–C57. The segment at 48–55 is interaction with Ca(2+)-activated K(+) channels; the sequence is GKCMNGKC.

It belongs to the short scorpion toxin superfamily. Potassium channel inhibitor family. Alpha-KTx 04 subfamily. In terms of tissue distribution, expressed by the venom gland.

It is found in the secreted. Functionally, potently blocks Kv1.1/KCNA1 (85%), Kv1.2/KCNA2 (91%), Kv1.3/KCNA3 (89%), Kv1.6/KCNA6 (94%), and Shaker (97%). In Tityus serrulatus (Brazilian scorpion), this protein is Potassium channel toxin alpha-KTx 4.1.